A 133-amino-acid chain; its full sequence is Large ribosomal subunit protein bL20 (133 aa).

It belongs to the bacterial ribosomal protein bL20 family.

Functionally, binds directly to 23S ribosomal RNA and is necessary for the in vitro assembly process of the 50S ribosomal subunit. It is not involved in the protein synthesizing functions of that subunit. The polypeptide is Large ribosomal subunit protein bL20 (Bartonella tribocorum (strain CIP 105476 / IBS 506)).